A 337-amino-acid polypeptide reads, in one-letter code: GTPase Obg (337 aa).

The region spanning 1–159 (MDFIDEVKLY…RNIVLKLKVL (159 aa)) is the Obg domain. The OBG-type G domain maps to 160–329 (SDVGIIGMPN…LNEKVKTKEI (170 aa)). GTP is bound by residues 166-173 (GMPNVGKS), 191-195 (FTTIR), 212-215 (DIPG), 279-282 (NKCD), and 310-312 (DDD). Positions 173 and 193 each coordinate Mg(2+).

It belongs to the TRAFAC class OBG-HflX-like GTPase superfamily. OBG GTPase family. In terms of assembly, monomer. The cofactor is Mg(2+).

It localises to the cytoplasm. Its function is as follows. An essential GTPase which binds GTP, GDP and possibly (p)ppGpp with moderate affinity, with high nucleotide exchange rates and a fairly low GTP hydrolysis rate. Plays a role in control of the cell cycle, stress response, ribosome biogenesis and in those bacteria that undergo differentiation, in morphogenesis control. The polypeptide is GTPase Obg (Wolbachia pipientis subsp. Culex pipiens (strain wPip)).